We begin with the raw amino-acid sequence, 201 residues long: ATP-dependent Clp protease proteolytic subunit (201 aa).

Catalysis depends on Ser-103, which acts as the Nucleophile. His-128 is a catalytic residue.

It belongs to the peptidase S14 family. Fourteen ClpP subunits assemble into 2 heptameric rings which stack back to back to give a disk-like structure with a central cavity, resembling the structure of eukaryotic proteasomes.

It localises to the cytoplasm. It catalyses the reaction Hydrolysis of proteins to small peptides in the presence of ATP and magnesium. alpha-casein is the usual test substrate. In the absence of ATP, only oligopeptides shorter than five residues are hydrolyzed (such as succinyl-Leu-Tyr-|-NHMec, and Leu-Tyr-Leu-|-Tyr-Trp, in which cleavage of the -Tyr-|-Leu- and -Tyr-|-Trp bonds also occurs).. Cleaves peptides in various proteins in a process that requires ATP hydrolysis. Has a chymotrypsin-like activity. Plays a major role in the degradation of misfolded proteins. The sequence is that of ATP-dependent Clp protease proteolytic subunit from Bordetella avium (strain 197N).